A 128-amino-acid chain; its full sequence is Glycine cleavage system H protein (128 aa).

A Lipoyl-binding domain is found at 25-107 (TITVGITHHA…YGAGWFFKIK (83 aa)). Position 66 is an N6-lipoyllysine (lysine 66).

This sequence belongs to the GcvH family. The glycine cleavage system is composed of four proteins: P, T, L and H. Requires (R)-lipoate as cofactor.

Its function is as follows. The glycine cleavage system catalyzes the degradation of glycine. The H protein shuttles the methylamine group of glycine from the P protein to the T protein. The sequence is that of Glycine cleavage system H protein from Neisseria meningitidis serogroup C (strain 053442).